The following is a 239-amino-acid chain: Type III pantothenate kinase (239 aa).

6 to 13 (DAGNTRLK) lines the ATP pocket. Residues Tyr-87 and 94-97 (GADR) each bind substrate. The active-site Proton acceptor is the Asp-96. ATP is bound at residue Thr-119. Residue Ser-169 participates in substrate binding.

Belongs to the type III pantothenate kinase family. Homodimer. NH4(+) serves as cofactor. The cofactor is K(+).

Its subcellular location is the cytoplasm. The catalysed reaction is (R)-pantothenate + ATP = (R)-4'-phosphopantothenate + ADP + H(+). Its pathway is cofactor biosynthesis; coenzyme A biosynthesis; CoA from (R)-pantothenate: step 1/5. Its function is as follows. Catalyzes the phosphorylation of pantothenate (Pan), the first step in CoA biosynthesis. The protein is Type III pantothenate kinase of Laribacter hongkongensis (strain HLHK9).